The primary structure comprises 283 residues: Phosphatidylglycerol--prolipoprotein diacylglyceryl transferase (283 aa).

4 consecutive transmembrane segments (helical) span residues 17–37 (LAVR…TFLG), 56–76 (FLTW…VLFY), 92–112 (WEGG…IWLF), and 117–137 (GIGF…GLAS). Residue Arg139 coordinates a 1,2-diacyl-sn-glycero-3-phospho-(1'-sn-glycerol). 3 consecutive transmembrane segments (helical) span residues 194–214 (PSQL…VWLF), 222–242 (GQVA…AEFA), and 255–275 (GLSM…VGFV).

It belongs to the Lgt family.

It is found in the cell inner membrane. The catalysed reaction is L-cysteinyl-[prolipoprotein] + a 1,2-diacyl-sn-glycero-3-phospho-(1'-sn-glycerol) = an S-1,2-diacyl-sn-glyceryl-L-cysteinyl-[prolipoprotein] + sn-glycerol 1-phosphate + H(+). It functions in the pathway protein modification; lipoprotein biosynthesis (diacylglyceryl transfer). Its function is as follows. Catalyzes the transfer of the diacylglyceryl group from phosphatidylglycerol to the sulfhydryl group of the N-terminal cysteine of a prolipoprotein, the first step in the formation of mature lipoproteins. This is Phosphatidylglycerol--prolipoprotein diacylglyceryl transferase from Neisseria meningitidis serogroup C (strain 053442).